The following is a 109-amino-acid chain: MSLTADPPACTVPAAGVSSTHKLVNGGAEKIVFKIKSSNNNEYRIAPVFGFVDPSGSKDVVITRTAGAPKEDKLVVHFASAPADATDAQAAFVAVAPAGTVTIPMSATA.

Residues 1–109 form the MSP domain; that stretch reads MSLTADPPAC…TVTIPMSATA (109 aa).

In terms of assembly, monomer. In terms of tissue distribution, expressed at higher level in testis.

This chain is Sperm-specific class P protein 19 (ssp-19), found in Caenorhabditis elegans.